The chain runs to 604 residues: Baculoviral IAP repeat-containing protein 3 (604 aa).

Residues 29–96 form a BIR 1 repeat; sequence ELYRMSTYST…RNLYPSCSFI (68 aa). Position 130 is an omega-N-methylarginine (Arg130). Position 140 is a phosphoserine (Ser140). 2 BIR repeats span residues 169–235 and 255–322; these read EEDR…CPFV and LAAR…CEYL. Zn(2+) contacts are provided by Cys292, Cys295, His312, and Cys319. A CARD domain is found at 439–529; it reads RESDDVSLIR…MLYKRFFVQQ (91 aa). The RING-type zinc-finger motif lies at 557 to 592; it reads CKVCMDKEVSIVFIPCGHLVVCRDCAPSLRKCPICR.

This sequence belongs to the IAP family. Interacts with PRSS25; the interaction inhibits apoptotic suppressor activity. The BIR motifs region interacts with TNF receptor associated factors 1 and 2 (TRAF1 and TRAF2) to form a heteromeric complex, which is then recruited to the tumor necrosis factor receptor 2 (TNFR2). Interaction with TRAF2 is required for ubiquitination of IKBKE, degradation of NFKBIA and activation of NF-kappa-B. Interacts with RIP1, RIP2, RIP3, RIP4 and USP19. Post-translationally, auto-ubiquitinated and degraded by the proteasome in apoptotic cells.

Its subcellular location is the cytoplasm. The protein resides in the nucleus. The catalysed reaction is S-ubiquitinyl-[E2 ubiquitin-conjugating enzyme]-L-cysteine + [acceptor protein]-L-lysine = [E2 ubiquitin-conjugating enzyme]-L-cysteine + N(6)-ubiquitinyl-[acceptor protein]-L-lysine.. With respect to regulation, USP19 regulates the stability of BIRC3/c-IAP2 by preventing its ubiquitination. Its function is as follows. Multi-functional protein which regulates not only caspases and apoptosis, but also modulates inflammatory signaling and immunity, mitogenic kinase signaling and cell proliferation, as well as cell invasion and metastasis. Acts as an E3 ubiquitin-protein ligase regulating NF-kappa-B signaling and regulates both canonical and non-canonical NF-kappa-B signaling by acting in opposite directions: acts as a positive regulator of the canonical pathway and suppresses constitutive activation of non-canonical NF-kappa-B signaling. The target proteins for its E3 ubiquitin-protein ligase activity include: RIPK1, RIPK2, RIPK3, RIPK4, CASP3, CASP7, CASP8, IKBKE, TRAF1, and BCL10. Acts as an important regulator of innate immune signaling via regulation of Toll-like receptors (TLRs), Nodlike receptors (NLRs) and RIG-I like receptors (RLRs), collectively referred to as pattern recognition receptors (PRRs). Protects cells from spontaneous formation of the ripoptosome, a large multi-protein complex that has the capability to kill cancer cells in a caspase-dependent and caspase-independent manner. Suppresses ripoptosome formation by ubiquitinating RIPK1 and CASP8. In Canis lupus familiaris (Dog), this protein is Baculoviral IAP repeat-containing protein 3 (BIRC3).